The chain runs to 339 residues: MIFIDACFRKETPYTPIWMMRQAGRYLSEYQESRKKAGSFLELCKNSDLATEVTLQPVEILGVDAAILFSDILVVPLEMGLNLEFIPKKGPHFLETITDLKSVESLKVGAYKQLNYVYDTISQTRQKLSKEKALIGFCGSPWTLATYMIEGEGSKSYAKSKKMLYSEPEILKALLEKLSLELIEYLSLQIQAGVNAVMIFDSWASALEKEAYLKFSWDYLKKISKELKKRYPHIPVILFPKGIGAYLDSIDGEFDVFGVDWGTPLTAAKKILGGKYVLQGNLEPTRLYDKNALEEGVETILKVMGNQGHIFNLGHGMLPDLPRENAKYLVQLVHAKTRR.

Substrate contacts are provided by residues 21–25 (RQAGR), Asp-71, Tyr-147, Ser-202, and His-315.

This sequence belongs to the uroporphyrinogen decarboxylase family. Homodimer.

Its subcellular location is the cytoplasm. It catalyses the reaction uroporphyrinogen III + 4 H(+) = coproporphyrinogen III + 4 CO2. Its pathway is porphyrin-containing compound metabolism; protoporphyrin-IX biosynthesis; coproporphyrinogen-III from 5-aminolevulinate: step 4/4. Functionally, catalyzes the decarboxylation of four acetate groups of uroporphyrinogen-III to yield coproporphyrinogen-III. This Helicobacter pylori (strain G27) protein is Uroporphyrinogen decarboxylase.